The sequence spans 341 residues: S-adenosylmethionine:tRNA ribosyltransferase-isomerase (341 aa).

It belongs to the QueA family. In terms of assembly, monomer.

The protein localises to the cytoplasm. It carries out the reaction 7-aminomethyl-7-carbaguanosine(34) in tRNA + S-adenosyl-L-methionine = epoxyqueuosine(34) in tRNA + adenine + L-methionine + 2 H(+). Its pathway is tRNA modification; tRNA-queuosine biosynthesis. Functionally, transfers and isomerizes the ribose moiety from AdoMet to the 7-aminomethyl group of 7-deazaguanine (preQ1-tRNA) to give epoxyqueuosine (oQ-tRNA). The protein is S-adenosylmethionine:tRNA ribosyltransferase-isomerase of Staphylococcus haemolyticus (strain JCSC1435).